A 180-amino-acid chain; its full sequence is Acireductone dioxygenase (180 aa).

Residues His-97, His-99, Glu-103, and His-141 each coordinate Fe(2+). Residues His-97, His-99, Glu-103, and His-141 each contribute to the Ni(2+) site.

The protein belongs to the acireductone dioxygenase (ARD) family. In terms of assembly, monomer. Fe(2+) serves as cofactor. It depends on Ni(2+) as a cofactor.

The enzyme catalyses 1,2-dihydroxy-5-(methylsulfanyl)pent-1-en-3-one + O2 = 3-(methylsulfanyl)propanoate + CO + formate + 2 H(+). The catalysed reaction is 1,2-dihydroxy-5-(methylsulfanyl)pent-1-en-3-one + O2 = 4-methylsulfanyl-2-oxobutanoate + formate + 2 H(+). It functions in the pathway amino-acid biosynthesis; L-methionine biosynthesis via salvage pathway; L-methionine from S-methyl-5-thio-alpha-D-ribose 1-phosphate: step 5/6. In terms of biological role, catalyzes 2 different reactions between oxygen and the acireductone 1,2-dihydroxy-3-keto-5-methylthiopentene (DHK-MTPene) depending upon the metal bound in the active site. Fe-containing acireductone dioxygenase (Fe-ARD) produces formate and 2-keto-4-methylthiobutyrate (KMTB), the alpha-ketoacid precursor of methionine in the methionine recycle pathway. Ni-containing acireductone dioxygenase (Ni-ARD) produces methylthiopropionate, carbon monoxide and formate, and does not lie on the methionine recycle pathway. The sequence is that of Acireductone dioxygenase from Yersinia pseudotuberculosis serotype O:1b (strain IP 31758).